The chain runs to 352 residues: Fatty acid synthase (352 aa).

A Ketosynthase family 3 (KS3) domain is found at 1–352; the sequence is MEDVVIAGIA…KVVLSLEHGL (352 aa). Active-site for beta-ketoacyl synthase activity residues include Cys-161, His-293, and His-331.

As to quaternary structure, homodimer which monomers are arranged in a head to tail fashion.

The catalysed reaction is acetyl-CoA + n malonyl-CoA + 2n NADPH + 2n H(+) = a long-chain fatty acid + (n+1) CoA + n CO2 + 2n NADP(+).. Fatty acid synthetase catalyzes the formation of long-chain fatty acids from acetyl-CoA, malonyl-CoA and NADPH. This multifunctional protein has 7 catalytic activities as an acyl carrier protein. In Anser anser anser (Western greylag goose), this protein is Fatty acid synthase (FASN).